We begin with the raw amino-acid sequence, 143 residues long: Auxin-responsive protein SAUR67 (143 aa).

The protein belongs to the ARG7 family.

The protein resides in the cell membrane. In terms of biological role, may promote auxin-stimulated organ elongation, such as hypocotyls, stamen filaments and petals. This chain is Auxin-responsive protein SAUR67, found in Arabidopsis thaliana (Mouse-ear cress).